Reading from the N-terminus, the 301-residue chain is Tyrosine recombinase XerC (301 aa).

The Core-binding (CB) domain occupies methionine 1–valine 89. In terms of domain architecture, Tyr recombinase spans arginine 110–aspartate 290. Catalysis depends on residues arginine 151, lysine 175, histidine 242, arginine 245, and histidine 268. The O-(3'-phospho-DNA)-tyrosine intermediate role is filled by tyrosine 277.

Belongs to the 'phage' integrase family. XerC subfamily. In terms of assembly, forms a cyclic heterotetrameric complex composed of two molecules of XerC and two molecules of XerD.

Its subcellular location is the cytoplasm. Site-specific tyrosine recombinase, which acts by catalyzing the cutting and rejoining of the recombining DNA molecules. The XerC-XerD complex is essential to convert dimers of the bacterial chromosome into monomers to permit their segregation at cell division. It also contributes to the segregational stability of plasmids. In Neisseria meningitidis serogroup B (strain ATCC BAA-335 / MC58), this protein is Tyrosine recombinase XerC.